The following is a 427-amino-acid chain: GTPase ERA-like, chloroplastic (427 aa).

The N-terminal 39 residues, 1–39, are a transit peptide targeting the chloroplast; sequence MAVSPHISPTLSRYKFFSTSVVENPNFSPYRIYSRRRVT. Residues 128 to 298 enclose the Era-type G domain; that stretch reads RSGYVAVVGM…KEWILSKLPF (171 aa). The interval 136–143 is G1; the sequence is GMPNVGKS. 136–143 provides a ligand contact to GTP; it reads GMPNVGKS. Residues 162 to 166 form a G2 region; the sequence is QTTRH. Positions 183–186 are G3; it reads DTPG. GTP is bound by residues 183 to 187 and 248 to 251; these read DTPGV and NKKD. The G4 stretch occupies residues 248–251; that stretch reads NKKD. Residues 277 to 279 are G5; that stretch reads VSA. Positions 329 to 406 constitute a KH type-2 domain; it reads YRNEVPYACQ…FLEVEVKVKE (78 aa).

It belongs to the TRAFAC class TrmE-Era-EngA-EngB-Septin-like GTPase superfamily. Era GTPase family.

It is found in the plastid. The protein localises to the chloroplast stroma. The protein resides in the chloroplast nucleoid. Its function is as follows. Nuclear genome-encoded probable GTPase involved in ribosome biogenesis in chloroplasts. Plays a role in 16S rRNA maturation in plastids and may contribute to the assembly of the small (30S) ribosomal subunit. The chain is GTPase ERA-like, chloroplastic from Arabidopsis thaliana (Mouse-ear cress).